The following is a 101-amino-acid chain: Small ribosomal subunit protein bS18c (101 aa).

Residues 1-19 are compositionally biased toward basic residues; that stretch reads MDKSKRPFRKSKRSFRKRL. The segment at 1–23 is disordered; that stretch reads MDKSKRPFRKSKRSFRKRLPPIG.

The protein belongs to the bacterial ribosomal protein bS18 family. As to quaternary structure, part of the 30S ribosomal subunit.

The protein resides in the plastid. Its subcellular location is the chloroplast. The sequence is that of Small ribosomal subunit protein bS18c from Chloranthus spicatus (Chulantree).